A 248-amino-acid polypeptide reads, in one-letter code: Probable transcriptional regulatory protein R02753 (248 aa).

Belongs to the TACO1 family.

Its subcellular location is the cytoplasm. The sequence is that of Probable transcriptional regulatory protein R02753 from Rhizobium meliloti (strain 1021) (Ensifer meliloti).